A 511-amino-acid polypeptide reads, in one-letter code: Serine hydroxymethyltransferase (511 aa).

K287 carries the N6-(pyridoxal phosphate)lysine modification.

This sequence belongs to the SHMT family. As to quaternary structure, homotetramer. The cofactor is pyridoxal 5'-phosphate.

The catalysed reaction is (6R)-5,10-methylene-5,6,7,8-tetrahydrofolate + glycine + H2O = (6S)-5,6,7,8-tetrahydrofolate + L-serine. Its pathway is one-carbon metabolism; tetrahydrofolate interconversion. Its function is as follows. Interconversion of serine and glycine. In Caenorhabditis briggsae, this protein is Serine hydroxymethyltransferase.